Here is a 452-residue protein sequence, read N- to C-terminus: MHQRALLFSALAVAANAQQVGTQKPETHPPLTWQKCTAAGSCSQQSGSVVIDANWRWLHSTKDTTNCYTGNTWNTELCPDNESCAQNCAVDGADYAGTYGVTTSGSELKLSFVTGANVGSRLYLMQDDETYQHFNLLNNEFTFDVDVSNLPCGLNGALYFVAMDADGGMSKYPSNKAGAKYGTGYCDSQCPRDLKFINGMANVEGWKPSSNDKNAGVGGHGSCCPEMDIWEANSISTAVTPHPCDDVSQTMCSGDACGGTYSATRYAGTCDPDGCDFNPFRMGNESFYGPGKIVDTKSEMTVVTQFITADGTDTGALSEIKRLYVQNGKVIANSVSNVADVSGNSISSDFCTAQKKAFGDEDIFAKHGGLSGMGKALSEMVLIMSIWDDHHSSMMWLDSTYPTDADPSKPGVARGTCEHGAGDPEKVESQHPDASVTFSNIKFGPIGSTYKA.

An N-terminal signal peptide occupies residues 1–17 (MHQRALLFSALAVAANA). N-linked (GlcNAc...) asparagine glycosylation is present at Asn81. The active-site Nucleophile is the Glu226. Catalysis depends on Glu231, which acts as the Proton donor. Residue Asn284 is glycosylated (N-linked (GlcNAc...) asparagine). The segment at 406 to 432 (DPSKPGVARGTCEHGAGDPEKVESQHP) is disordered. A compositionally biased stretch (basic and acidic residues) spans 416–431 (TCEHGAGDPEKVESQH).

It belongs to the glycosyl hydrolase 7 (cellulase C) family.

It localises to the secreted. It carries out the reaction Hydrolysis of (1-&gt;4)-beta-D-glucosidic linkages in cellulose and cellotetraose, releasing cellobiose from the non-reducing ends of the chains.. Its function is as follows. The biological conversion of cellulose to glucose generally requires three types of hydrolytic enzymes: (1) Endoglucanases which cut internal beta-1,4-glucosidic bonds; (2) Exocellobiohydrolases that cut the disaccharide cellobiose from the non-reducing end of the cellulose polymer chain; (3) Beta-1,4-glucosidases which hydrolyze the cellobiose and other short cello-oligosaccharides to glucose. The polypeptide is Probable 1,4-beta-D-glucan cellobiohydrolase A (cbhA) (Neosartorya fischeri (strain ATCC 1020 / DSM 3700 / CBS 544.65 / FGSC A1164 / JCM 1740 / NRRL 181 / WB 181) (Aspergillus fischerianus)).